The following is a 346-amino-acid chain: 3 beta-hydroxysteroid dehydrogenase/Delta 5--&gt;4-isomerase (346 aa).

Y147 functions as the Proton acceptor in the catalytic mechanism. Residue K151 coordinates NAD(+).

It belongs to the 3-beta-HSD family.

The catalysed reaction is a 3beta-hydroxy-Delta(5)-steroid + NAD(+) = a 3-oxo-Delta(5)-steroid + NADH + H(+). The enzyme catalyses a 3-oxo-Delta(5)-steroid = a 3-oxo-Delta(4)-steroid. It participates in lipid metabolism; steroid biosynthesis. Its function is as follows. Catalyzes the oxidative conversion of Delta(5)-ene-3-beta-hydroxy steroid, and the oxidative conversion of ketosteroids. The 3-beta-HSD enzymatic system plays a crucial role in the biosynthesis of all classes of hormonal steroids. During viral infection, steroid production contributes to virulence by inhibiting the host inflammatory response. This chain is 3 beta-hydroxysteroid dehydrogenase/Delta 5--&gt;4-isomerase (OPG174), found in Vaccinia virus (strain Western Reserve) (VACV).